Reading from the N-terminus, the 147-residue chain is Hemoglobin subunit delta (147 aa).

The Globin domain occupies 3 to 147; that stretch reads HLTADETALV…VANALAHKYH (145 aa). Ser-51 is subject to Phosphoserine. Heme b-binding residues include His-64 and His-93.

This sequence belongs to the globin family. Heterotetramer of two delta chains and two alpha chains. As to expression, red blood cells.

The sequence is that of Hemoglobin subunit delta (HBD) from Dugong dugon (Dugong).